A 957-amino-acid chain; its full sequence is Glycine dehydrogenase (decarboxylating) 2 (957 aa).

Lysine 707 is subject to N6-(pyridoxal phosphate)lysine.

Belongs to the GcvP family. As to quaternary structure, the glycine cleavage system is composed of four proteins: P, T, L and H. It depends on pyridoxal 5'-phosphate as a cofactor.

The enzyme catalyses N(6)-[(R)-lipoyl]-L-lysyl-[glycine-cleavage complex H protein] + glycine + H(+) = N(6)-[(R)-S(8)-aminomethyldihydrolipoyl]-L-lysyl-[glycine-cleavage complex H protein] + CO2. Its function is as follows. The glycine cleavage system catalyzes the degradation of glycine. The P protein binds the alpha-amino group of glycine through its pyridoxal phosphate cofactor; CO(2) is released and the remaining methylamine moiety is then transferred to the lipoamide cofactor of the H protein. The polypeptide is Glycine dehydrogenase (decarboxylating) 2 (Pseudomonas fluorescens (strain Pf0-1)).